The sequence spans 197 residues: Phosphoheptose isomerase (197 aa).

In terms of domain architecture, SIS spans 36–197 (LVHSLAQGGK…VDSLLLGVEE (162 aa)). A substrate-binding site is contributed by 51 to 53 (NGG). Positions 60 and 64 each coordinate Zn(2+). Residues Glu64, 93 to 94 (ND), 119 to 121 (STS), Ser124, and Gln174 each bind substrate. Positions 174 and 182 each coordinate Zn(2+).

Belongs to the SIS family. GmhA subfamily. Homotetramer. Requires Zn(2+) as cofactor.

Its subcellular location is the cytoplasm. The enzyme catalyses 2 D-sedoheptulose 7-phosphate = D-glycero-alpha-D-manno-heptose 7-phosphate + D-glycero-beta-D-manno-heptose 7-phosphate. It participates in carbohydrate biosynthesis; D-glycero-D-manno-heptose 7-phosphate biosynthesis; D-glycero-alpha-D-manno-heptose 7-phosphate and D-glycero-beta-D-manno-heptose 7-phosphate from sedoheptulose 7-phosphate: step 1/1. Its function is as follows. Catalyzes the isomerization of sedoheptulose 7-phosphate in D-glycero-D-manno-heptose 7-phosphate. This is Phosphoheptose isomerase from Thiobacillus denitrificans (strain ATCC 25259 / T1).